The sequence spans 136 residues: NADPH-dependent 7-cyano-7-deazaguanine reductase (136 aa).

The active-site Thioimide intermediate is the cysteine 53. Aspartate 60 serves as the catalytic Proton donor. Substrate is bound by residues 75 to 77 (VEL) and 94 to 95 (HE).

It belongs to the GTP cyclohydrolase I family. QueF type 1 subfamily.

The protein localises to the cytoplasm. It carries out the reaction 7-aminomethyl-7-carbaguanine + 2 NADP(+) = 7-cyano-7-deazaguanine + 2 NADPH + 3 H(+). It participates in tRNA modification; tRNA-queuosine biosynthesis. Functionally, catalyzes the NADPH-dependent reduction of 7-cyano-7-deazaguanine (preQ0) to 7-aminomethyl-7-deazaguanine (preQ1). This Nostoc sp. (strain PCC 7120 / SAG 25.82 / UTEX 2576) protein is NADPH-dependent 7-cyano-7-deazaguanine reductase.